Reading from the N-terminus, the 496-residue chain is Probable CtpA-like serine protease (496 aa).

Residues 1 to 16 (MDDKQHTTSSDDERAE) show a composition bias toward basic and acidic residues. The disordered stretch occupies residues 1–27 (MDDKQHTTSSDDERAENATSNQDQQTN). A compositionally biased stretch (polar residues) spans 17 to 27 (NATSNQDQQTN). Residues 39-59 (FISILIGTIIITAVITVVAYI) form a helical membrane-spanning segment. The PDZ domain maps to 124–206 (TKSFNEGVSG…TEVTLTVQRG (83 aa)). Residues Ser-329, Asp-340, and Lys-354 each act as charge relay system in the active site.

It belongs to the peptidase S41A family.

Its subcellular location is the cell membrane. This chain is Probable CtpA-like serine protease, found in Staphylococcus aureus (strain MRSA252).